Reading from the N-terminus, the 315-residue chain is Methionyl-tRNA formyltransferase (315 aa).

117 to 120 (SLLP) contacts (6S)-5,6,7,8-tetrahydrofolate.

The protein belongs to the Fmt family.

The enzyme catalyses L-methionyl-tRNA(fMet) + (6R)-10-formyltetrahydrofolate = N-formyl-L-methionyl-tRNA(fMet) + (6S)-5,6,7,8-tetrahydrofolate + H(+). Attaches a formyl group to the free amino group of methionyl-tRNA(fMet). The formyl group appears to play a dual role in the initiator identity of N-formylmethionyl-tRNA by promoting its recognition by IF2 and preventing the misappropriation of this tRNA by the elongation apparatus. This chain is Methionyl-tRNA formyltransferase, found in Methylibium petroleiphilum (strain ATCC BAA-1232 / LMG 22953 / PM1).